We begin with the raw amino-acid sequence, 185 residues long: Translation initiation factor IF-3 (185 aa).

It belongs to the IF-3 family. Monomer.

It localises to the cytoplasm. IF-3 binds to the 30S ribosomal subunit and shifts the equilibrium between 70S ribosomes and their 50S and 30S subunits in favor of the free subunits, thus enhancing the availability of 30S subunits on which protein synthesis initiation begins. The sequence is that of Translation initiation factor IF-3 from Streptococcus pneumoniae serotype 19F (strain G54).